The chain runs to 199 residues: RNA-free ribonuclease P (199 aa).

Belongs to the HARP family.

It catalyses the reaction Endonucleolytic cleavage of RNA, removing 5'-extranucleotides from tRNA precursor.. RNA-free RNase P that catalyzes the removal of the 5'-leader sequence from pre-tRNA to produce the mature 5'-terminus. In Thermococcus onnurineus (strain NA1), this protein is RNA-free ribonuclease P.